We begin with the raw amino-acid sequence, 119 residues long: Large ribosomal subunit protein bL20 (119 aa).

It belongs to the bacterial ribosomal protein bL20 family.

Its function is as follows. Binds directly to 23S ribosomal RNA and is necessary for the in vitro assembly process of the 50S ribosomal subunit. It is not involved in the protein synthesizing functions of that subunit. In Azoarcus sp. (strain BH72), this protein is Large ribosomal subunit protein bL20.